Consider the following 649-residue polypeptide: Macrolide export ATP-binding/permease protein MacB 1 (649 aa).

An ABC transporter domain is found at 5 to 243; that stretch reads LELEGIRRSY…AAAELMSLTP (239 aa). 41 to 48 lines the ATP pocket; the sequence is GASGSGKS. The next 5 helical transmembrane spans lie at 274–294, 420–440, 524–544, 578–598, and 608–628; these read ALTM…LVVG, VVGQ…VVAE, LFLT…VMNI, VLVC…IGLI, and IAFP…IGVV.

The protein belongs to the ABC transporter superfamily. Macrolide exporter (TC 3.A.1.122) family. In terms of assembly, homodimer. Part of the tripartite efflux system MacAB-TolC, which is composed of an inner membrane transporter, MacB, a periplasmic membrane fusion protein, MacA, and an outer membrane component, TolC. The complex forms a large protein conduit and can translocate molecules across both the inner and outer membranes. Interacts with MacA.

It is found in the cell inner membrane. In terms of biological role, part of the tripartite efflux system MacAB-TolC. MacB is a non-canonical ABC transporter that contains transmembrane domains (TMD), which form a pore in the inner membrane, and an ATP-binding domain (NBD), which is responsible for energy generation. Confers resistance against macrolides. The sequence is that of Macrolide export ATP-binding/permease protein MacB 1 from Yersinia pestis bv. Antiqua (strain Antiqua).